Here is a 491-residue protein sequence, read N- to C-terminus: Cytochrome P450 2K3 (491 aa).

Residue C434 coordinates heme.

Belongs to the cytochrome P450 family. Requires heme as cofactor.

The protein localises to the endoplasmic reticulum membrane. It localises to the microsome membrane. It catalyses the reaction an organic molecule + reduced [NADPH--hemoprotein reductase] + O2 = an alcohol + oxidized [NADPH--hemoprotein reductase] + H2O + H(+). In Oncorhynchus mykiss (Rainbow trout), this protein is Cytochrome P450 2K3 (cyp2k3).